We begin with the raw amino-acid sequence, 425 residues long: Light-independent protochlorophyllide reductase subunit N (425 aa).

[4Fe-4S] cluster is bound by residues C17, C42, and C103.

It belongs to the BchN/ChlN family. As to quaternary structure, protochlorophyllide reductase is composed of three subunits; ChlL, ChlN and ChlB. Forms a heterotetramer of two ChlB and two ChlN subunits. It depends on [4Fe-4S] cluster as a cofactor.

It catalyses the reaction chlorophyllide a + oxidized 2[4Fe-4S]-[ferredoxin] + 2 ADP + 2 phosphate = protochlorophyllide a + reduced 2[4Fe-4S]-[ferredoxin] + 2 ATP + 2 H2O. The protein operates within porphyrin-containing compound metabolism; chlorophyll biosynthesis (light-independent). Component of the dark-operative protochlorophyllide reductase (DPOR) that uses Mg-ATP and reduced ferredoxin to reduce ring D of protochlorophyllide (Pchlide) to form chlorophyllide a (Chlide). This reaction is light-independent. The NB-protein (ChlN-ChlB) is the catalytic component of the complex. The protein is Light-independent protochlorophyllide reductase subunit N of Synechococcus sp. (strain CC9605).